The following is a 704-amino-acid chain: uncharacterized protein (704 aa).

This is an uncharacterized protein from Rickettsia conorii (strain ATCC VR-613 / Malish 7).